The primary structure comprises 331 residues: Anthranilate phosphoribosyltransferase (331 aa).

5-phospho-alpha-D-ribose 1-diphosphate is bound by residues Gly79, 82-83, Ser87, 89-92, 107-115, and Ser119; these read GD, NIST, and KHCNTSISS. Gly79 contributes to the anthranilate binding site. Ser91 serves as a coordination point for Mg(2+). An anthranilate-binding site is contributed by Asn110. Arg165 contributes to the anthranilate binding site. Positions 223 and 224 each coordinate Mg(2+).

Belongs to the anthranilate phosphoribosyltransferase family. As to quaternary structure, homodimer. The cofactor is Mg(2+).

It catalyses the reaction N-(5-phospho-beta-D-ribosyl)anthranilate + diphosphate = 5-phospho-alpha-D-ribose 1-diphosphate + anthranilate. It participates in amino-acid biosynthesis; L-tryptophan biosynthesis; L-tryptophan from chorismate: step 2/5. Its function is as follows. Catalyzes the transfer of the phosphoribosyl group of 5-phosphorylribose-1-pyrophosphate (PRPP) to anthranilate to yield N-(5'-phosphoribosyl)-anthranilate (PRA). The chain is Anthranilate phosphoribosyltransferase from Buchnera aphidicola subsp. Schlechtendalia chinensis.